A 1079-amino-acid polypeptide reads, in one-letter code: Translation initiation factor IF-2 (1079 aa).

3 stretches are compositionally biased toward basic and acidic residues: residues 52-65 (VQAQ…KEGN), 75-90 (RDGD…KAPE), and 102-134 (APER…KEPQ). Residues 52–488 (VQAQRDGGAR…RGKKDVRPAA (437 aa)) form a disordered region. Positions 150–184 (APVAKVVEAAPAETPAPEAPAVKATVTAEAAPAKT) are enriched in low complexity. Basic and acidic residues predominate over residues 185–194 (VEPESERPQA). A compositionally biased stretch (low complexity) spans 276 to 291 (AAVAQQQMQQQAAQQQ). The span at 306 to 327 (GGYRPEGQREGGYRPEGQREGG) shows a compositional bias: basic and acidic residues. Composition is skewed to low complexity over residues 348–370 (EGGY…GPRP) and 380–398 (PGAP…APRP). The segment covering 419–429 (PRPGGFGGAPG) has biased composition (gly residues). A compositionally biased stretch (basic and acidic residues) spans 461–471 (PRGRSDDDVMR). Residues 473–482 (PRGRGKRGKK) are compositionally biased toward basic residues. The region spanning 578 to 745 (TRPPVVTIMG…LIAIQAEILE (168 aa)) is the tr-type G domain. Residues 587-594 (GHVDHGKT) form a G1 region. 587 to 594 (GHVDHGKT) is a GTP binding site. The interval 612-616 (GITQH) is G2. The tract at residues 633–636 (DTPG) is G3. GTP-binding positions include 633–637 (DTPGH) and 687–690 (NKMD). The interval 687–690 (NKMD) is G4. The segment at 723–725 (SAK) is G5.

The protein belongs to the TRAFAC class translation factor GTPase superfamily. Classic translation factor GTPase family. IF-2 subfamily.

The protein resides in the cytoplasm. Its function is as follows. One of the essential components for the initiation of protein synthesis. Protects formylmethionyl-tRNA from spontaneous hydrolysis and promotes its binding to the 30S ribosomal subunits. Also involved in the hydrolysis of GTP during the formation of the 70S ribosomal complex. The chain is Translation initiation factor IF-2 from Nitratidesulfovibrio vulgaris (strain DP4) (Desulfovibrio vulgaris).